A 351-amino-acid polypeptide reads, in one-letter code: Tsukushi-A (351 aa).

The first 17 residues, 1–17 (MALSSWIFFLLVHGIVG), serve as a signal peptide directing secretion. LRR repeat units lie at residues 59 to 82 (PLDT…VLSG), 85 to 108 (YTTL…TFSK), 109 to 132 (LRYL…SFLY), 134 to 155 (RLTE…AFTL), 158 to 181 (QGRS…AERP), 182 to 203 (VPNI…DLHG), 204 to 226 (IPLR…SFLG), 252 to 276 (LTSL…MFFG), and 277 to 300 (LKAL…IMLH).

In terms of assembly, interacts with bmp4. Interacts with dll1 (via extracellular region). Interacts with fgf8; inhibits fgf8 signaling. Interacts with nodal2/Xnr2; enhances nodal2 activity. As to expression, during embryogenesis, localized to the animal hemisphere during late blastula and gastrula stages. At stage 10, expression is also detected around the dorsal blastopore lip. Expressed in the mandibular crest segment, branchial crest segment and differentiating somites at stage 21/22. Expressed in the germ ring including the shield at shield stage and in the tailbud at the 10-somite stage. At the early neurula stage (stage 13), expression is hardly detectable in the presumptive neural plate region, and restricted to the non-neural ectoderm where its levels increase by stage 14, especially in the presumptive anterior neural fold. Also expressed in the prospective cranial neural crest. At the early tailbud stage (stage 23), expressed in cranial neural crest cells, the dorsal retina and the lens placode.

The protein localises to the secreted. Functionally, contributes to various developmental events through its interactions with multiple signaling pathways. Dorsalizing factor which functions as an inhibitor of bone morphogenetic proteins (BMP) during gastrulation. Promotes dll1-dependent activation of Notch signaling and is required for neural crest formation. Induces endoderm and dorsal mesoderm formation by enhancing nodal2/Xnr2 activity while inhibiting ventrolateral mesoderm formation through inhibition of fgf8. This Xenopus laevis (African clawed frog) protein is Tsukushi-A.